The following is a 371-amino-acid chain: GDP-mannose transporter (371 aa).

The Cytoplasmic portion of the chain corresponds to 1–51 (MGVISFYLIGQLLYLIRKKYTTTYRQQQQHQYNMDSKHSTSSSSSGSLATR). A helical transmembrane segment spans residues 52-72 (ISNSGPISIAAYCLSSILMTV). Residues 73 to 80 (TNKYVLSG) are Lumenal-facing. A helical transmembrane segment spans residues 81–101 (FSFNLNFFLLAVQSIVCIVTI). At 102–121 (GSLKSLNIITYRQFNKDEAK) the chain is on the cytoplasmic side. Residues 122–138 (KWSPIAFLLVAMIYTSS) traverse the membrane as a helical segment. Residues 139–145 (KALQYLS) are Lumenal-facing. A helical membrane pass occupies residues 146 to 162 (IPVYTIFKNLTIILIAY). Residues 163–171 (GEVIWFGGK) lie on the Cytoplasmic side of the membrane. Residues 172 to 192 (VTTMALSSFLLMVLSSVIAYY) traverse the membrane as a helical segment. The Lumenal portion of the chain corresponds to 193 to 206 (GDNAAVKSHDDAFA). The helical transmembrane segment at 207–227 (LYLGYFWMLTNCFASAAFVLI) threads the bilayer. Residues 228-241 (MRKRIKLTNFKDFD) are Cytoplasmic-facing. A helical transmembrane segment spans residues 242–262 (TMYYNNLLSIPILLICSFIFE). The Lumenal portion of the chain corresponds to 263 to 281 (DWSSANVSLNFPADNRVTT). An N-linked (GlcNAc...) asparagine glycan is attached at Asn-268. The helical transmembrane segment at 282–302 (ITAMILSGASSVGISYCSAWC) threads the bilayer. Residues 303 to 309 (VRVTSST) are Cytoplasmic-facing. Residues 310 to 329 (TYSMVGALNKLPIALSGLIF) form a helical membrane-spanning segment. Residues 330–332 (FEA) lie on the Lumenal side of the membrane. The chain crosses the membrane as a helical span at residues 333–355 (AVNFWSVSSIFVGFGAGLVYAVA). Residues 356 to 371 (KQKQQKEQSQQLPTTK) lie on the Cytoplasmic side of the membrane.

It belongs to the TPT transporter family. SLC35D subfamily. In terms of assembly, homooligomer.

It localises to the golgi apparatus membrane. The protein resides in the cytoplasmic vesicle membrane. Its subcellular location is the endoplasmic reticulum membrane. In terms of biological role, involved in the import of GDP-mannose from the cytoplasm into the Golgi lumen. Involved in hyphal formation. The protein is GDP-mannose transporter (VRG4) of Candida albicans (strain SC5314 / ATCC MYA-2876) (Yeast).